Consider the following 444-residue polypeptide: Methylenetetrahydrofolate--tRNA-(uracil-5-)-methyltransferase TrmFO (444 aa).

10-15 (GAGLAG) is a binding site for FAD.

This sequence belongs to the MnmG family. TrmFO subfamily. Requires FAD as cofactor.

It localises to the cytoplasm. It carries out the reaction uridine(54) in tRNA + (6R)-5,10-methylene-5,6,7,8-tetrahydrofolate + NADH + H(+) = 5-methyluridine(54) in tRNA + (6S)-5,6,7,8-tetrahydrofolate + NAD(+). It catalyses the reaction uridine(54) in tRNA + (6R)-5,10-methylene-5,6,7,8-tetrahydrofolate + NADPH + H(+) = 5-methyluridine(54) in tRNA + (6S)-5,6,7,8-tetrahydrofolate + NADP(+). Catalyzes the folate-dependent formation of 5-methyl-uridine at position 54 (M-5-U54) in all tRNAs. The sequence is that of Methylenetetrahydrofolate--tRNA-(uracil-5-)-methyltransferase TrmFO from Streptococcus uberis (strain ATCC BAA-854 / 0140J).